We begin with the raw amino-acid sequence, 679 residues long: Glycine--tRNA ligase beta subunit (679 aa).

This sequence belongs to the class-II aminoacyl-tRNA synthetase family. Tetramer of two alpha and two beta subunits.

It is found in the cytoplasm. It catalyses the reaction tRNA(Gly) + glycine + ATP = glycyl-tRNA(Gly) + AMP + diphosphate. The sequence is that of Glycine--tRNA ligase beta subunit from Streptococcus uberis (strain ATCC BAA-854 / 0140J).